The chain runs to 273 residues: ATP synthase subunit delta (273 aa).

The interval 55–78 is disordered; sequence TDPAQSARPRPSSPSVSSAPRSAA. Residues 57–78 show a composition bias toward low complexity; that stretch reads PAQSARPRPSSPSVSSAPRSAA.

Belongs to the ATPase delta chain family. In terms of assembly, F-type ATPases have 2 components, F(1) - the catalytic core - and F(0) - the membrane proton channel. F(1) has five subunits: alpha(3), beta(3), gamma(1), delta(1), epsilon(1). F(0) has three main subunits: a(1), b(2) and c(10-14). The alpha and beta chains form an alternating ring which encloses part of the gamma chain. F(1) is attached to F(0) by a central stalk formed by the gamma and epsilon chains, while a peripheral stalk is formed by the delta and b chains.

Its subcellular location is the cell membrane. F(1)F(0) ATP synthase produces ATP from ADP in the presence of a proton or sodium gradient. F-type ATPases consist of two structural domains, F(1) containing the extramembraneous catalytic core and F(0) containing the membrane proton channel, linked together by a central stalk and a peripheral stalk. During catalysis, ATP synthesis in the catalytic domain of F(1) is coupled via a rotary mechanism of the central stalk subunits to proton translocation. In terms of biological role, this protein is part of the stalk that links CF(0) to CF(1). It either transmits conformational changes from CF(0) to CF(1) or is implicated in proton conduction. This Streptomyces lividans protein is ATP synthase subunit delta.